The sequence spans 186 residues: CoB--CoM heterodisulfide reductase iron-sulfur subunit C 2 (186 aa).

2 4Fe-4S ferredoxin-type domains span residues 26–56 and 67–99; these read GEDI…AYRT and LDDV…TEII. 8 residues coordinate [4Fe-4S] cluster: Cys36, Cys39, Cys42, Cys46, Cys79, Cys82, Cys85, and Cys89.

The protein belongs to the HdrC family. As to quaternary structure, the heterodisulfide reductase is composed of three subunits; HdrA, HdrB and HdrC. It depends on [4Fe-4S] cluster as a cofactor.

The protein operates within cofactor metabolism; coenzyme M-coenzyme B heterodisulfide reduction; coenzyme B and coenzyme M from coenzyme M-coenzyme B heterodisulfide: step 1/1. Functionally, part of a complex that catalyzes the reversible reduction of CoM-S-S-CoB to the thiol-coenzymes H-S-CoM (coenzyme M) and H-S-CoB (coenzyme B). The chain is CoB--CoM heterodisulfide reductase iron-sulfur subunit C 2 (hdrC2) from Methanocaldococcus jannaschii (strain ATCC 43067 / DSM 2661 / JAL-1 / JCM 10045 / NBRC 100440) (Methanococcus jannaschii).